The sequence spans 275 residues: uncharacterized protein (275 aa).

[4Fe-4S] cluster-binding residues include Cys-97, Cys-102, Cys-136, and Cys-140. Cys-140 contacts siroheme.

The protein belongs to the nitrite and sulfite reductase 4Fe-4S domain family.

This is an uncharacterized protein from Methanocaldococcus jannaschii (strain ATCC 43067 / DSM 2661 / JAL-1 / JCM 10045 / NBRC 100440) (Methanococcus jannaschii).